The chain runs to 370 residues: MLRRMGDASLTTELGRVLVTGGAGFVGANLVTTLLDRGHWVRSFDRAPSLLPAHPQLEVLQGDITDADVCAAAVDGIDTIFHTAAIIELMGGASVTDEYRQRSFAVNVGGTENLLHAGQRAGVQRFVYTSSNSVVMGGQNIAGGDETLPYTDRFNDLYTETKVVAERFVLAQNGVDGMLTCAIRPSGIWGNGDQTMFRKLFESVLKGHVKVLVGRKSARLDNSYVHNLIHGFILAAAHLVPDGTAPGQAYFINDAEPINMFEFARPVLEACGQRWPKMRISGPAVRWVMTGWQRLHFRFGFPAPLLEPLAVERLYLDNYFSIAKARRDLGYEPLFTTQQALTECLPYYVSLFEQMKNEARAEKTAATVKP.

The Proton acceptor role is filled by tyrosine 158. An NAD(+)-binding site is contributed by lysine 162.

The protein belongs to the 3-beta-HSD family. In terms of assembly, monomer.

It localises to the cytoplasm. It carries out the reaction a 3beta-hydroxy-Delta(5)-steroid + NAD(+) = a 3-oxo-Delta(5)-steroid + NADH + H(+). It catalyses the reaction cholesterol + NAD(+) = cholest-5-en-3-one + NADH + H(+). The catalysed reaction is pregnenolone + NAD(+) = pregn-5-ene-3,20-dione + NADH + H(+). The enzyme catalyses 3beta-hydroxyandrost-5-en-17-one + NAD(+) = androst-5-ene-3,17-dione + NADH + H(+). It carries out the reaction a 3-oxo-Delta(5)-steroid = a 3-oxo-Delta(4)-steroid. It catalyses the reaction cholest-5-en-3-one = cholest-4-en-3-one. The catalysed reaction is pregn-5-ene-3,20-dione = progesterone. The enzyme catalyses androst-5-ene-3,17-dione = androst-4-ene-3,17-dione. Its pathway is lipid metabolism; steroid biosynthesis. 3-beta-HSD is a bifunctional enzyme, that catalyzes the oxidation and isomerization of cholesterol, pregnenolone, and dehydroepiandrosterone (DHEA) into cholest-4-en-3-one, progesterone, and androsterone, respectively. This Mycobacterium tuberculosis (strain CDC 1551 / Oshkosh) protein is 3 beta-hydroxysteroid dehydrogenase/Delta 5--&gt;4-isomerase.